The chain runs to 461 residues: Secreted 45 kDa protein (461 aa).

The N-terminal stretch at 1–27 is a signal peptide; sequence MKKKIISAILMSTVILSAAAPLSGVYA. Residues 264 to 329 show a composition bias toward low complexity; that stretch reads SSASASSSQA…GNTNSGTSTG (66 aa). A disordered region spans residues 264–343; that stretch reads SSASASSSQA…TTTGGSGINS (80 aa). The segment covering 330 to 340 has biased composition (gly residues); that stretch reads NTGGTTTGGSG. Positions 330–459 constitute a Peptidase C51 domain; it reads NTGGTTTGGS…VSASGVTFLM (130 aa).

In Lactococcus lactis subsp. cremoris (strain MG1363), this protein is Secreted 45 kDa protein (usp45).